Here is a 242-residue protein sequence, read N- to C-terminus: Ribonuclease 3 (242 aa).

An RNase III domain is found at 12–139 (ANELLEALGT…LIGATFLEHG (128 aa)). Position 51 (Glu51) interacts with Mg(2+). Asp55 is an active-site residue. Residues Asp125 and Glu128 each contribute to the Mg(2+) site. Glu128 is an active-site residue. Positions 165–236 (LDWKTSLTVK…AEAGWKSLDS (72 aa)) constitute a DRBM domain.

The protein belongs to the ribonuclease III family. Homodimer. Mg(2+) is required as a cofactor.

The protein localises to the cytoplasm. The catalysed reaction is Endonucleolytic cleavage to 5'-phosphomonoester.. Its function is as follows. Digests double-stranded RNA. Involved in the processing of primary rRNA transcript to yield the immediate precursors to the large and small rRNAs (23S and 16S). Processes some mRNAs, and tRNAs when they are encoded in the rRNA operon. Processes pre-crRNA and tracrRNA of type II CRISPR loci if present in the organism. This chain is Ribonuclease 3, found in Bifidobacterium longum (strain NCC 2705).